A 4655-amino-acid chain; its full sequence is Low-density lipoprotein receptor-related protein 2 (4655 aa).

Positions 1-25 (MDRGPAAVACTLLLALVACLAPASG) are cleaved as a signal peptide. At 26-4423 (QECDSAHFRC…FSKGISPGTT (4398 aa)) the chain is on the extracellular side. LDL-receptor class A domains are found at residues 27-63 (ECDS…IGCA), 66-104 (TCQQ…QDCS), 107-143 (TCSS…NDCQ), 146-180 (TCEQ…INCT), 182-218 (ICLH…HACN), 221-257 (TCGG…DGCE), and 265-308 (KCSP…KYCS). 21 disulfide bridges follow: C28-C40, C35-C53, C47-C62, C67-C80, C74-C93, C87-C103, C108-C120, C115-C133, C127-C142, C147-C157, C152-C170, C164-C179, C183-C195, C190-C208, C202-C217, C222-C234, C229-C247, C241-C256, C266-C279, C273-C292, and C286-C307. N-linked (GlcNAc...) asparagine glycans are attached at residues N159 and N178. Residues N299, N300, N341, N388, and N463 are each glycosylated (N-linked (GlcNAc...) asparagine). LDL-receptor class B repeat units lie at residues 436 to 478 (QRVF…DWVN), 479 to 521 (NKIY…DPTV), 522 to 568 (GYLF…DMIS), 569 to 613 (KRVY…FEGQ), 753 to 795 (STIF…DWIS), 796 to 837 (KNLY…HPFA), 838 to 881 (GYLF…DWAA), and 882 to 925 (SRLY…FGEH). The N-linked (GlcNAc...) asparagine glycan is linked to N866. Positions 1025–1061 (QCGLFSFPCKNGRCVPNYYLCDGVDDCHDNSDEQLCG) constitute an LDL-receptor class A 8 domain. 3 disulfide bridges follow: C1026-C1038, C1033-C1051, and C1045-C1060. Residue N1064 is glycosylated (N-linked (GlcNAc...) asparagine). LDL-receptor class A domains lie at 1066–1102 (TCSS…HNCP), 1108–1144 (SCLD…KNCN), 1148–1184 (TCQP…VGCV), 1186–1223 (NCTA…AGCP), 1229–1267 (MCHS…NACV), 1270–1306 (TCPS…KDCP), and 1304–1349 (DCPT…PLCN). 6 cysteine pairs are disulfide-bonded: C1067–C1079, C1074–C1092, C1086–C1101, C1109–C1121, C1116–C1134, and C1128–C1143. Ca(2+) is bound by residues W1126, D1129, D1131, D1133, D1139, and E1140. N1144 is a glycosylation site (N-linked (GlcNAc...) asparagine). Disulfide bonds link C1149–C1161, C1156–C1174, and C1168–C1183. N-linked (GlcNAc...) asparagine glycosylation is present at N1186. Disulfide bonds link C1187/C1200, C1194/C1213, C1207/C1222, C1230/C1243, C1237/C1256, C1250/C1266, C1271/C1283, C1278/C1296, C1290/C1305, C1305/C1325, C1312/C1338, and C1332/C1348. The Ca(2+) site is built by D1208, V1210, D1212, D1218, and E1219. N-linked (GlcNAc...) asparagine glycans are attached at residues N1327, N1340, and N1383. The EGF-like 1; calcium-binding domain occupies 1390–1429 (DIDECDILGSCSQHCYNMRGSFRCSCDTGYMLESDGRTCK). Intrachain disulfides connect C1394-C1404, C1400-C1413, and C1415-C1428. 3 N-linked (GlcNAc...) asparagine glycosylation sites follow: N1464, N1496, and N1550. LDL-receptor class B repeat units lie at residues 1478-1520 (GRIF…DWVG), 1521-1563 (RNLY…DPRM), 1566-1609 (HLLF…DYPN), 1610-1654 (RLLY…FEDS), and 1655-1695 (VYWT…VHPS). N-linked (GlcNAc...) asparagine glycosylation is present at N1675. The EGF-like 2 domain occupies 1700-1741 (SVNPCAFSRCSHLCLLSSQGPHFYSCVCPSGWSLSPDLLNCL). 3 disulfides stabilise this stretch: C1704-C1713, C1709-C1725, and C1727-C1740. LDL-receptor class B repeat units lie at residues 1790 to 1832 (QYIY…DWIS), 1833 to 1882 (RNLY…DPAR), 1883 to 1930 (GKLY…DIEE), 1931 to 1972 (QKLY…HDSF), and 1973 to 2013 (LYYT…YHRR). N-linked (GlcNAc...) asparagine glycosylation occurs at N1810. N-linked (GlcNAc...) asparagine glycosylation occurs at N2055. LDL-receptor class B repeat units lie at residues 2107–2156 (GFIY…DWVA), 2157–2201 (GNLY…DPKN), 2202–2245 (RYLF…DRSD), 2246–2289 (GYVY…FENS), 2431–2477 (DRIY…DWIT), 2478–2518 (RRIY…DPCQ), 2519–2562 (GYLY…DYEE), 2563–2604 (DLLY…YGQY), and 2605–2646 (IYWT…VVKN). 2 N-linked (GlcNAc...) asparagine glycosylation sites follow: N2177 and N2224. Residues N2499 and N2547 are each glycosylated (N-linked (GlcNAc...) asparagine). 10 consecutive LDL-receptor class A domains span residues 2699–2737 (RCGA…SVCA), 2740–2776 (TCSP…AGCL), 2779–2818 (DCNA…KNCP), 2821–2860 (TCQS…TYCT), 2863–2900 (TCSS…ASCG), 2905–2944 (TCLA…HQCQ), 2947–2989 (NCSD…QNCT), 2992–3028 (TCSE…RGCL), 3031–3069 (TCQQ…HLCH), and 3074–3110 (TCPP…KGCG). 18 disulfide bridges follow: C2700–C2712, C2707–C2725, C2719–C2736, C2741–C2753, C2748–C2766, C2760–C2775, C2780–C2793, C2788–C2806, C2800–C2817, C2822–C2835, C2829–C2848, C2842–C2859, C2864–C2876, C2871–C2889, C2883–C2899, C2906–C2918, C2913–C2931, and C2925–C2943. N2781 is a glycosylation site (N-linked (GlcNAc...) asparagine). N-linked (GlcNAc...) asparagine glycans are attached at residues N2809 and N2810. N2947 carries an N-linked (GlcNAc...) asparagine glycan. Disulfide bonds link C2948/C2965, C2955/C2978, C2972/C2988, C2993/C3005, C3000/C3018, C3012/C3027, C3032/C3044, C3039/C3057, C3051/C3068, C3075/C3087, C3082/C3100, C3094/C3109, C3114/C3126, C3122/C3135, C3137/C3150, C3156/C3167, C3163/C3176, and C3178/C3191. A glycan (N-linked (GlcNAc...) asparagine) is linked at N2987. Residues 3110–3151 (GINECHDPSISGCDHNCTDTLTSFYCSCRPGYKLMSDKRTCV) form the EGF-like 3 domain. N-linked (GlcNAc...) asparagine glycosylation is present at N3125. An EGF-like 4; calcium-binding domain is found at 3152–3192 (DIDECTEMPFVCSQKCENVIGSYICKCAPGYLREPDGKTCR). 4 N-linked (GlcNAc...) asparagine glycosylation sites follow: N3211, N3257, N3315, and N3355. LDL-receptor class B repeat units lie at residues 3239-3281 (KRLY…DWVS), 3282-3324 (RKLY…DNPR), 3333-3376 (GYLY…DYTN), 3377-3419 (DLLY…FEDT), and 3420-3460 (IYWT…YHPY). The N-linked (GlcNAc...) asparagine glycan is linked to N3446. 11 consecutive LDL-receptor class A domains span residues 3511–3549 (MCSS…ALCP), 3552–3590 (FCRL…LLCE), 3593–3631 (HCDS…SHCA), 3634–3672 (TCRP…EECM), 3677–3715 (LCDN…QGCE), 3718–3755 (TCHP…ENCA), 3758–3794 (ECTE…RDCE), 3797–3833 (TCHP…ADCP), 3841–3879 (YCQA…HLCL), 3882–3921 (PCNS…EHCR), and 3927–3963 (PCTE…LGCN). 33 cysteine pairs are disulfide-bonded: C3512–C3525, C3519–C3538, C3532–C3548, C3553–C3565, C3560–C3578, C3572–C3589, C3594–C3606, C3601–C3619, C3613–C3630, C3635–C3647, C3642–C3660, C3654–C3671, C3678–C3692, C3686–C3705, C3699–C3714, C3719–C3732, C3727–C3745, C3739–C3754, C3759–C3771, C3766–C3784, C3778–C3793, C3798–C3810, C3805–C3823, C3817–C3832, C3842–C3854, C3849–C3867, C3861–C3878, C3883–C3896, C3891–C3909, C3903–C3920, C3928–C3940, C3935–C3953, and C3947–C3962. N-linked (GlcNAc...) asparagine glycosylation is present at N3564. N3680 is a glycosylation site (N-linked (GlcNAc...) asparagine). A glycan (N-linked (GlcNAc...) asparagine) is linked at N3978. The region spanning 4007–4048 (DINECEQFGTCPQHCRNTKGSYECVCADGFTSMSDRPGKRCA) is the EGF-like 5; calcium-binding domain. Intrachain disulfides connect C4011–C4021, C4017–C4030, and C4032–C4047. N-linked (GlcNAc...) asparagine glycosylation is present at N4068. 3 LDL-receptor class B repeats span residues 4154 to 4196 (RHIY…NPKL), 4197 to 4240 (GLMF…DYLN), and 4242 to 4283 (DRIY…FEDQ). The N-linked (GlcNAc...) asparagine glycan is linked to N4327. The EGF-like 6 domain occupies 4377-4411 (LPPPCRCMHGGNCYFDETDLPKCKCPSGYTGKYCE). Intrachain disulfides connect C4381/C4389, C4383/C4399, and C4401/C4410. The chain crosses the membrane as a helical span at residues 4424–4446 (AVAVLLTILLIVVIGALAIAGFF). Over 4447-4655 (HYRRTGSLLP…ANLVKEDSEV (209 aa)) the chain is Cytoplasmic. The short motif at 4453–4462 (SLLPALPKLP) is the SH3-binding element. The PxLPxI/L motif 1; mediates interaction with ANKRA2 motif lies at 4456–4461 (PALPKL). Positions 4459 to 4464 (PKLPSL) match the PxLPxI/L motif 2; mediates interaction with ANKRA2 motif. Residues S4463 and S4466 each carry the phosphoserine modification. The Endocytosis signal signature appears at 4521–4526 (FENPMY). Residues 4550–4574 (KNYGSPINPSEIVPETNPTSPAADG) are disordered. Residues 4565 to 4574 (TNPTSPAADG) show a composition bias toward polar residues. S4569 is subject to Phosphoserine. The interaction with DAB2 stretch occupies residues 4589 to 4602 (QTTNFENPIYAQME). The short motif at 4595–4598 (NPIY) is the NPXY motif element. The SH2-binding signature appears at 4598–4601 (YAQM). The tract at residues 4601–4655 (MENEQKESVAATPPPSPSLPAKPKPPSRRDPTPTYSATEDTFKDTANLVKEDSEV) is disordered. The short motif at 4611–4622 (ATPPPSPSLPAK) is the SH3-binding element. Positions 4612–4624 (TPPPSPSLPAKPK) are enriched in pro residues. S4616 is subject to Phosphoserine. At T4632 the chain carries Phosphothreonine. At S4653 the chain carries Phosphoserine.

Belongs to the LDLR family. As to quaternary structure, binds plasminogen, extracellular matrix components, plasminogen activator-plasminogen activator inhibitor type I complex, apolipoprotein E-enriched beta-VLDL, lipoprotein lipase, lactoferrin, CLU/clusterin and calcium. Forms a multimeric complex together with LRPAP1. Interacts (via PxLPxI/L motif) with ANKRA2 (via ankyrin repeats). Interacts with LRP2BP. Interacts (via NPXY motif) with DAB2; the interaction is not affected by tyrosine phosphorylation of the NPXY motif. Interacts with MB. Interacts with BMP4. Interacts with the Sonic hedgehog protein N-product which is the active product of SHH. Interacts with CST3 in a calcium-dependent manner. Interacts with the vitamin-D binding protein GC/DBP. Interacts with sex hormone-binding protein SHBG. Interacts with angiotensin-2. Also interacts with angiotensin 1-7. Interacts with APOM. Interacts with selenoprotein SEPP1. Interacts with LEP. Interacts with ALB. Interacts with the antiapoptotic protein BIRC5/survivin. Interacts with matrix metalloproteinase MMP2 in complex with metalloproteinase inhibitor TIMP1. In neurons, forms a trimeric complex with APP and APPB1/FE65. Interacts with LDLRAP1/ARH; mediates trafficking of LRP2 to the endocytic recycling compartment. Does not interact with beta-amyloid protein 40 alone but interacts with the complex composed of beta-amyloid protein 40 and CLU/APOJ. Interacts with MDK. Post-translationally, a fraction undergoes proteolytic cleavage of the extracellular domain at the cell membrane to generate a cytoplasmic tail fragment. This is internalized into the early endosome from where it trafficks in an LDLRAP1/ARH-dependent manner to the endocytic recycling compartment (ERC). In the ERC, it is further cleaved by gamma-secretase to release a fragment which translocates to the nucleus and mediates transcriptional repression. In terms of processing, N-glycosylation is required for ligand binding. In terms of tissue distribution, expressed in first and third trimester cytotrophoblasts in the placenta (at protein level). Absorptive epithelia, including renal proximal tubules.

The protein resides in the apical cell membrane. It is found in the endosome lumen. It localises to the membrane. Its subcellular location is the coated pit. The protein localises to the cell projection. The protein resides in the dendrite. It is found in the axon. Multiligand endocytic receptor. Acts together with CUBN to mediate endocytosis of high-density lipoproteins. Mediates receptor-mediated uptake of polybasic drugs such as aprotinin, aminoglycosides and polymyxin B. In the kidney, mediates the tubular uptake and clearance of leptin. Also mediates transport of leptin across the blood-brain barrier through endocytosis at the choroid plexus epithelium. Endocytosis of leptin in neuronal cells is required for hypothalamic leptin signaling and leptin-mediated regulation of feeding and body weight. Mediates endocytosis and subsequent lysosomal degradation of CST3 in kidney proximal tubule cells. Mediates renal uptake of 25-hydroxyvitamin D3 in complex with the vitamin D3 transporter GC/DBP. Mediates renal uptake of metallothionein-bound heavy metals. Together with CUBN, mediates renal reabsorption of myoglobin. Mediates renal uptake and subsequent lysosomal degradation of APOM. Plays a role in kidney selenium homeostasis by mediating renal endocytosis of selenoprotein SEPP1. Mediates renal uptake of the antiapoptotic protein BIRC5/survivin which may be important for functional integrity of the kidney. Mediates renal uptake of matrix metalloproteinase MMP2 in complex with metalloproteinase inhibitor TIMP1. Mediates endocytosis of Sonic hedgehog protein N-product (ShhN), the active product of SHH. Also mediates ShhN transcytosis. In the embryonic neuroepithelium, mediates endocytic uptake and degradation of BMP4, is required for correct SHH localization in the ventral neural tube and plays a role in patterning of the ventral telencephalon. Required at the onset of neurulation to sequester SHH on the apical surface of neuroepithelial cells of the rostral diencephalon ventral midline and to control PTCH1-dependent uptake and intracellular trafficking of SHH. During neurulation, required in neuroepithelial cells for uptake of folate bound to the folate receptor FOLR1 which is necessary for neural tube closure. In the adult brain, negatively regulates BMP signaling in the subependymal zone which enables neurogenesis to proceed. In astrocytes, mediates endocytosis of ALB which is required for the synthesis of the neurotrophic factor oleic acid. Involved in neurite branching. During optic nerve development, required for SHH-mediated migration and proliferation of oligodendrocyte precursor cells. Mediates endocytic uptake and clearance of SHH in the retinal margin which protects retinal progenitor cells from mitogenic stimuli and keeps them quiescent. Plays a role in reproductive organ development by mediating uptake in reproductive tissues of androgen and estrogen bound to the sex hormone binding protein SHBG. Mediates endocytosis of angiotensin-2. Also mediates endocytosis of angiotensis 1-7. Binds to the complex composed of beta-amyloid protein 40 and CLU/APOJ and mediates its endocytosis and lysosomal degradation. Required for embryonic heart development. Required for normal hearing, possibly through interaction with estrogen in the inner ear. This Homo sapiens (Human) protein is Low-density lipoprotein receptor-related protein 2.